The primary structure comprises 360 residues: Decorin (360 aa).

An N-terminal signal peptide occupies residues 1-16; the sequence is MKATIIFLLVAQVSWA. A propeptide spanning residues 17–30 is cleaved from the precursor; it reads GPFQQKGLFDFMLE. An O-linked (Xyl...) (glycosaminoglycan) serine glycan is attached at S34. Intrachain disulfides connect C55/C61 and C59/C68. LRR repeat units follow at residues 74-94, 95-118, 119-142, 143-163, 164-187, 188-213, 214-234, 235-258, 259-282, 283-305, 306-335, and 336-360; these read EKVP…NNKI, TEIK…NNKI, SKIS…KNQL, KELP…ENEI, TKVR…TNPL, KSSG…DTNI, TTIP…GNKI, TKVD…FNSI, SAVD…NNKL, VKVP…NNNI, SAIG…SNPV, and QYWE…GNYK. An N-linked (GlcNAc...) asparagine glycan is attached at N212. 2 N-linked (GlcNAc...) asparagine glycosylation sites follow: N263 and N304. C314 and C347 form a disulfide bridge.

It belongs to the small leucine-rich proteoglycan (SLRP) family. SLRP class I subfamily. Binds to type I and type II collagen, fibronectin and TGF-beta. Forms a ternary complex with MFAP2 and ELN. Interacts with DPT. In terms of processing, the attached glycosaminoglycan chain can be either chondroitin 4-sulfate, chondroitin 6-sulfate or dermatan sulfate, depending upon the tissue of origin.

Its subcellular location is the secreted. The protein localises to the extracellular space. The protein resides in the extracellular matrix. In terms of biological role, may affect the rate of fibrils formation. This is Decorin (DCN) from Bos taurus (Bovine).